Here is a 142-residue protein sequence, read N- to C-terminus: Translation initiation factor 2 subunit beta (142 aa).

This sequence belongs to the eIF-2-beta/eIF-5 family. As to quaternary structure, heterotrimer composed of an alpha, a beta and a gamma chain.

Functionally, eIF-2 functions in the early steps of protein synthesis by forming a ternary complex with GTP and initiator tRNA. The protein is Translation initiation factor 2 subunit beta of Thermococcus gammatolerans (strain DSM 15229 / JCM 11827 / EJ3).